Reading from the N-terminus, the 82-residue chain is Large ribosomal subunit protein bL31B (82 aa).

This sequence belongs to the bacterial ribosomal protein bL31 family. Type B subfamily. In terms of assembly, part of the 50S ribosomal subunit.

The chain is Large ribosomal subunit protein bL31B from Proteus mirabilis (strain HI4320).